The primary structure comprises 151 residues: 16.9 kDa class I heat shock protein 1 (151 aa).

One can recognise a sHSP domain in the interval 37–151 (ETAAFANARV…PEVKAIEISG (115 aa)).

This sequence belongs to the small heat shock protein (HSP20) family. In terms of assembly, may form oligomeric structures.

It is found in the cytoplasm. The sequence is that of 16.9 kDa class I heat shock protein 1 (hsp16.9A) from Triticum aestivum (Wheat).